Here is a 315-residue protein sequence, read N- to C-terminus: Thioredoxin reductase (315 aa).

Position 45–52 (glutamate 45–lysine 52) interacts with FAD. An intrachain disulfide couples cysteine 145 to cysteine 148. Aspartate 288–isoleucine 297 is an FAD binding site.

The protein belongs to the class-II pyridine nucleotide-disulfide oxidoreductase family. As to quaternary structure, homodimer. FAD is required as a cofactor.

The protein resides in the cytoplasm. It catalyses the reaction [thioredoxin]-dithiol + NADP(+) = [thioredoxin]-disulfide + NADPH + H(+). This is Thioredoxin reductase (trxB) from Mycoplasma pneumoniae (strain ATCC 29342 / M129 / Subtype 1) (Mycoplasmoides pneumoniae).